Reading from the N-terminus, the 342-residue chain is Histidinol-phosphate aminotransferase 2 (342 aa).

Position 206 is an N6-(pyridoxal phosphate)lysine (Lys-206).

It belongs to the class-II pyridoxal-phosphate-dependent aminotransferase family. Histidinol-phosphate aminotransferase subfamily. Pyridoxal 5'-phosphate serves as cofactor.

It catalyses the reaction L-histidinol phosphate + 2-oxoglutarate = 3-(imidazol-4-yl)-2-oxopropyl phosphate + L-glutamate. It functions in the pathway amino-acid biosynthesis; L-histidine biosynthesis; L-histidine from 5-phospho-alpha-D-ribose 1-diphosphate: step 7/9. The protein is Histidinol-phosphate aminotransferase 2 (hisC2) of Archaeoglobus fulgidus (strain ATCC 49558 / DSM 4304 / JCM 9628 / NBRC 100126 / VC-16).